Here is a 20-residue protein sequence, read N- to C-terminus: Cytosol aminopeptidase (20 aa).

The residue at position 6 (S6) is a Phosphoserine.

The protein belongs to the peptidase M17 family. As to quaternary structure, homohexamer. Requires Zn(2+) as cofactor. Mn(2+) serves as cofactor.

The protein localises to the cytoplasm. It carries out the reaction Release of an N-terminal amino acid, Xaa-|-Yaa-, in which Xaa is preferably Leu, but may be other amino acids including Pro although not Arg or Lys, and Yaa may be Pro. Amino acid amides and methyl esters are also readily hydrolyzed, but rates on arylamides are exceedingly low.. The catalysed reaction is an S-substituted L-cysteinylglycine + H2O = an S-substituted L-cysteine + glycine. It catalyses the reaction L-cysteinylglycine + H2O = L-cysteine + glycine. The enzyme catalyses S-benzyl-L-cysteinylglycine + H2O = S-benzyl-L-cysteine + glycine. It carries out the reaction Release of N-terminal proline from a peptide.. In terms of biological role, cytosolic metallopeptidase that catalyzes the removal of unsubstituted N-terminal hydrophobic amino acids from various peptides. The presence of Zn(2+) ions is essential for the peptidase activity, and the association with other cofactors can modulate the substrate spectificity of the enzyme. For instance, in the presence of Mn(2+), it displays a specific Cys-Gly hydrolyzing activity of Cys-Gly-S-conjugates. Involved in the metabolism of glutathione and in the degradation of glutathione S-conjugates, which may play a role in the control of the cell redox status. The chain is Cytosol aminopeptidase from Mesocricetus auratus (Golden hamster).